The primary structure comprises 144 residues: Granulocyte-macrophage colony-stimulating factor (144 aa).

Residues 1–17 form the signal peptide; it reads MWLQNLLFLGTVVCSIS. A glycan (O-linked (GalNAc...) serine) is linked at Ser-22. An O-linked (GalNAc...) threonine glycan is attached at Thr-27. Asn-44 carries an N-linked (GlcNAc...) asparagine glycan. Disulfide bonds link Cys-71–Cys-113 and Cys-105–Cys-138.

The protein belongs to the GM-CSF family. In terms of assembly, monomer. The signaling GM-CSF receptor complex is a dodecamer of two head-to-head hexamers of two alpha, two beta, and two ligand subunits.

It localises to the secreted. Functionally, cytokine that stimulates the growth and differentiation of hematopoietic precursor cells from various lineages, including granulocytes, macrophages, eosinophils and erythrocytes. In Canis lupus familiaris (Dog), this protein is Granulocyte-macrophage colony-stimulating factor (CSF2).